The chain runs to 207 residues: ATP-dependent Clp protease proteolytic subunit (207 aa).

Serine 111 acts as the Nucleophile in catalysis. The active site involves histidine 136.

This sequence belongs to the peptidase S14 family. Fourteen ClpP subunits assemble into 2 heptameric rings which stack back to back to give a disk-like structure with a central cavity, resembling the structure of eukaryotic proteasomes.

The protein localises to the cytoplasm. The enzyme catalyses Hydrolysis of proteins to small peptides in the presence of ATP and magnesium. alpha-casein is the usual test substrate. In the absence of ATP, only oligopeptides shorter than five residues are hydrolyzed (such as succinyl-Leu-Tyr-|-NHMec, and Leu-Tyr-Leu-|-Tyr-Trp, in which cleavage of the -Tyr-|-Leu- and -Tyr-|-Trp bonds also occurs).. Its function is as follows. Cleaves peptides in various proteins in a process that requires ATP hydrolysis. Has a chymotrypsin-like activity. Plays a major role in the degradation of misfolded proteins. This is ATP-dependent Clp protease proteolytic subunit from Yersinia pseudotuberculosis serotype O:1b (strain IP 31758).